Here is a 211-residue protein sequence, read N- to C-terminus: Uridine kinase (211 aa).

ATP is bound at residue 13–20; the sequence is GGTASGKT.

The protein belongs to the uridine kinase family.

It localises to the cytoplasm. The catalysed reaction is uridine + ATP = UMP + ADP + H(+). It carries out the reaction cytidine + ATP = CMP + ADP + H(+). Its pathway is pyrimidine metabolism; CTP biosynthesis via salvage pathway; CTP from cytidine: step 1/3. It participates in pyrimidine metabolism; UMP biosynthesis via salvage pathway; UMP from uridine: step 1/1. The protein is Uridine kinase of Thermus thermophilus (strain ATCC BAA-163 / DSM 7039 / HB27).